The primary structure comprises 322 residues: Thiamine thiazole synthase (322 aa).

Substrate is bound by residues C84, E105–A106, G113, and V178. Residue C211 is modified to 2,3-didehydroalanine (Cys). Substrate is bound by residues D213, H228, M280, and R290–G292.

This sequence belongs to the THI4 family. As to quaternary structure, homooctamer. Fe cation is required as a cofactor. During the catalytic reaction, a sulfide is transferred from Cys-211 to a reaction intermediate, generating a dehydroalanine residue.

It is found in the cytoplasm. The protein resides in the nucleus. The enzyme catalyses [ADP-thiazole synthase]-L-cysteine + glycine + NAD(+) = [ADP-thiazole synthase]-dehydroalanine + ADP-5-ethyl-4-methylthiazole-2-carboxylate + nicotinamide + 3 H2O + 2 H(+). Functionally, involved in biosynthesis of the thiamine precursor thiazole. Catalyzes the conversion of NAD and glycine to adenosine diphosphate 5-(2-hydroxyethyl)-4-methylthiazole-2-carboxylic acid (ADT), an adenylated thiazole intermediate. The reaction includes an iron-dependent sulfide transfer from a conserved cysteine residue of the protein to a thiazole intermediate. The enzyme can only undergo a single turnover, which suggests it is a suicide enzyme. May have additional roles in adaptation to various stress conditions and in DNA damage tolerance. The polypeptide is Thiamine thiazole synthase (Fusarium vanettenii (strain ATCC MYA-4622 / CBS 123669 / FGSC 9596 / NRRL 45880 / 77-13-4) (Fusarium solani subsp. pisi)).